A 378-amino-acid chain; its full sequence is UDP-N-acetylglucosamine--N-acetylmuramyl-(pentapeptide) pyrophosphoryl-undecaprenol N-acetylglucosamine transferase (378 aa).

UDP-N-acetyl-alpha-D-glucosamine contacts are provided by residues threonine 24–glycine 26, asparagine 144, arginine 181, serine 215, and glutamine 310.

This sequence belongs to the glycosyltransferase 28 family. MurG subfamily.

It localises to the cell membrane. It carries out the reaction di-trans,octa-cis-undecaprenyl diphospho-N-acetyl-alpha-D-muramoyl-L-alanyl-D-glutamyl-meso-2,6-diaminopimeloyl-D-alanyl-D-alanine + UDP-N-acetyl-alpha-D-glucosamine = di-trans,octa-cis-undecaprenyl diphospho-[N-acetyl-alpha-D-glucosaminyl-(1-&gt;4)]-N-acetyl-alpha-D-muramoyl-L-alanyl-D-glutamyl-meso-2,6-diaminopimeloyl-D-alanyl-D-alanine + UDP + H(+). It functions in the pathway cell wall biogenesis; peptidoglycan biosynthesis. Its function is as follows. Cell wall formation. Catalyzes the transfer of a GlcNAc subunit on undecaprenyl-pyrophosphoryl-MurNAc-pentapeptide (lipid intermediate I) to form undecaprenyl-pyrophosphoryl-MurNAc-(pentapeptide)GlcNAc (lipid intermediate II). This is UDP-N-acetylglucosamine--N-acetylmuramyl-(pentapeptide) pyrophosphoryl-undecaprenol N-acetylglucosamine transferase from Nocardia farcinica (strain IFM 10152).